The sequence spans 370 residues: Anhydro-N-acetylmuramic acid kinase (370 aa).

Residue 13–20 (GTSMDGVD) coordinates ATP.

It belongs to the anhydro-N-acetylmuramic acid kinase family.

The enzyme catalyses 1,6-anhydro-N-acetyl-beta-muramate + ATP + H2O = N-acetyl-D-muramate 6-phosphate + ADP + H(+). The protein operates within amino-sugar metabolism; 1,6-anhydro-N-acetylmuramate degradation. It participates in cell wall biogenesis; peptidoglycan recycling. In terms of biological role, catalyzes the specific phosphorylation of 1,6-anhydro-N-acetylmuramic acid (anhMurNAc) with the simultaneous cleavage of the 1,6-anhydro ring, generating MurNAc-6-P. Is required for the utilization of anhMurNAc either imported from the medium or derived from its own cell wall murein, and thus plays a role in cell wall recycling. The polypeptide is Anhydro-N-acetylmuramic acid kinase (Shewanella frigidimarina (strain NCIMB 400)).